The primary structure comprises 254 residues: tRNA pseudouridine synthase A (254 aa).

Aspartate 52 functions as the Nucleophile in the catalytic mechanism. Position 110 (tyrosine 110) interacts with substrate.

This sequence belongs to the tRNA pseudouridine synthase TruA family. Homodimer.

It catalyses the reaction uridine(38/39/40) in tRNA = pseudouridine(38/39/40) in tRNA. Formation of pseudouridine at positions 38, 39 and 40 in the anticodon stem and loop of transfer RNAs. The polypeptide is tRNA pseudouridine synthase A (Thermodesulfovibrio yellowstonii (strain ATCC 51303 / DSM 11347 / YP87)).